Reading from the N-terminus, the 118-residue chain is Superoxide-generating NADPH oxidase light chain subunit (118 aa).

Transmembrane regions (helical) follow at residues 9–29 (WAAM…IMGI), 36–56 (IAIY…PLSF), 62–82 (AIFH…VLCY), and 83–103 (FLVP…VFLI).

It belongs to the p22phox family. As to quaternary structure, composed of a heavy chain and a light chain.

The protein resides in the cell membrane. In terms of biological role, critical component of the membrane-bound oxidase of phagocytes that generates superoxide. This chain is Superoxide-generating NADPH oxidase light chain subunit (cybA), found in Dictyostelium discoideum (Social amoeba).